A 262-amino-acid polypeptide reads, in one-letter code: Acyl-[acyl-carrier-protein]--UDP-N-acetylglucosamine O-acyltransferase (262 aa).

It belongs to the transferase hexapeptide repeat family. LpxA subfamily. Homotrimer.

The protein resides in the cytoplasm. It catalyses the reaction a (3R)-hydroxyacyl-[ACP] + UDP-N-acetyl-alpha-D-glucosamine = a UDP-3-O-[(3R)-3-hydroxyacyl]-N-acetyl-alpha-D-glucosamine + holo-[ACP]. It functions in the pathway glycolipid biosynthesis; lipid IV(A) biosynthesis; lipid IV(A) from (3R)-3-hydroxytetradecanoyl-[acyl-carrier-protein] and UDP-N-acetyl-alpha-D-glucosamine: step 1/6. Its function is as follows. Involved in the biosynthesis of lipid A, a phosphorylated glycolipid that anchors the lipopolysaccharide to the outer membrane of the cell. This Herminiimonas arsenicoxydans protein is Acyl-[acyl-carrier-protein]--UDP-N-acetylglucosamine O-acyltransferase.